The following is a 371-amino-acid chain: MAFKKLLAVLTAALSLRAAQGAAVEKRATCSNGKVVPAASCCTWFNVLSDIQENLFNGGQCGAEAHESIRLVFHDAIAISPAMEPQASSVRGADGSIMIFDEIETNFHPNIGLDEIVRLQKPFVQKHGVTPGDFIAFAGAVALSNCPGAPQMNFFTGRAPATQPAPDGLVPEPFHSVDQIIDRVFDAGEFDELELVWMLSAHSVAAANDIDPNIQGLPFDSTPGIFDSQFFVETQLAGTGFTGGSNNQGEVSSPLPGEMRLQSDFLIARDARTACEWQSFVNNQSKLVSDFQFIFLALTQLGQDPDAMTDCSAVIPISKPAPNNTPGFSFFPPGMTMDDVEQACAETPFPTLSTLPGPATSVARIPPPPGA.

Residues 1 to 21 (MAFKKLLAVLTAALSLRAAQG) form the signal peptide. Residues 22 to 27 (AAVEKR) constitute a propeptide that is removed on maturation. 4 cysteine pairs are disulfide-bonded: cysteine 30–cysteine 42, cysteine 41–cysteine 311, cysteine 61–cysteine 146, and cysteine 275–cysteine 344. Histidine 74 serves as the catalytic Proton acceptor. Positions 75, 92, 94, and 96 each coordinate Ca(2+). Histidine 202 contacts heme b. The Ca(2+) site is built by serine 203, aspartate 220, threonine 222, isoleucine 225, and aspartate 227. A glycan (N-linked (GlcNAc...) asparagine) is linked at asparagine 283. Positions 349–371 (FPTLSTLPGPATSVARIPPPPGA) are disordered.

It belongs to the peroxidase family. Ligninase subfamily. The cofactor is Ca(2+). Requires heme b as cofactor.

The enzyme catalyses 1-(3,4-dimethoxyphenyl)-2-(2-methoxyphenoxy)propane-1,3-diol + H2O2 = 3,4-dimethoxybenzaldehyde + guaiacol + glycolaldehyde + H2O. The catalysed reaction is 2 (3,4-dimethoxyphenyl)methanol + H2O2 = 2 (3,4-dimethoxyphenyl)methanol radical + 2 H2O. The protein operates within secondary metabolite metabolism; lignin degradation. In terms of biological role, depolymerization of lignin. Catalyzes the C(alpha)-C(beta) cleavage of the propyl side chains of lignin. The sequence is that of Ligninase LG5 (GLG5) from Phanerodontia chrysosporium (White-rot fungus).